The chain runs to 109 residues: Putative double-stranded DNA mimic protein Ent638_2296 (109 aa).

This sequence belongs to the putative dsDNA mimic protein family.

Its function is as follows. May act as a double-stranded DNA (dsDNA) mimic. Probably regulates the activity of a dsDNA-binding protein. The sequence is that of Putative double-stranded DNA mimic protein Ent638_2296 from Enterobacter sp. (strain 638).